Here is a 141-residue protein sequence, read N- to C-terminus: Hemoglobin subunit alpha (141 aa).

The region spanning 1–141 is the Globin domain; sequence VLSSDDKCNV…VSSVLTSKYR (141 aa). His-58 is an O2 binding site. His-87 contributes to the heme b binding site.

It belongs to the globin family. As to quaternary structure, heterotetramer of two alpha chains and two beta chains. As to expression, red blood cells.

In terms of biological role, involved in oxygen transport from the lung to the various peripheral tissues. Has antimicrobial activity against B.subtilis ATCC 6633. Has antioxidant activity. The polypeptide is Hemoglobin subunit alpha (Crocodylus siamensis (Siamese crocodile)).